Here is a 127-residue protein sequence, read N- to C-terminus: Large ribosomal subunit protein uL22 (127 aa).

This sequence belongs to the universal ribosomal protein uL22 family. Part of the 50S ribosomal subunit.

Functionally, this protein binds specifically to 23S rRNA; its binding is stimulated by other ribosomal proteins, e.g. L4, L17, and L20. It is important during the early stages of 50S assembly. It makes multiple contacts with different domains of the 23S rRNA in the assembled 50S subunit and ribosome. Its function is as follows. The globular domain of the protein is located near the polypeptide exit tunnel on the outside of the subunit, while an extended beta-hairpin is found that lines the wall of the exit tunnel in the center of the 70S ribosome. In Methylobacterium nodulans (strain LMG 21967 / CNCM I-2342 / ORS 2060), this protein is Large ribosomal subunit protein uL22.